Consider the following 290-residue polypeptide: MIQGSMVALVTPMHADNTLDWDSLHKLVDWHLEQGTHAIVAVGTTGESATLDVQEHLQVIKRVVDQVNGRIPVIAGTGANSTSEAVELTQAAKDVGADACLLVTPYYNKPTQEGLFLHHEYIANAVAIPQYLYNVPGRTGVDMKPETALRLAQVPNIAGIKEATGDLERARLLIDQAPPGFAIISGDDATAVELILLGGQGDISVTANVVPAAIARMCELALAGKAEEARTINTQLLPLHTAMFVESNPIPVKWAVEQLGLIQSGIRLPLTRLSAQYHQQVKTAMQLAGL.

Threonine 45 is a pyruvate binding site. Tyrosine 133 functions as the Proton donor/acceptor in the catalytic mechanism. Catalysis depends on lysine 161, which acts as the Schiff-base intermediate with substrate. Isoleucine 203 contributes to the pyruvate binding site.

The protein belongs to the DapA family. Homotetramer; dimer of dimers.

It localises to the cytoplasm. The catalysed reaction is L-aspartate 4-semialdehyde + pyruvate = (2S,4S)-4-hydroxy-2,3,4,5-tetrahydrodipicolinate + H2O + H(+). It participates in amino-acid biosynthesis; L-lysine biosynthesis via DAP pathway; (S)-tetrahydrodipicolinate from L-aspartate: step 3/4. Its function is as follows. Catalyzes the condensation of (S)-aspartate-beta-semialdehyde [(S)-ASA] and pyruvate to 4-hydroxy-tetrahydrodipicolinate (HTPA). The protein is 4-hydroxy-tetrahydrodipicolinate synthase of Cellvibrio japonicus (strain Ueda107) (Pseudomonas fluorescens subsp. cellulosa).